The primary structure comprises 183 residues: Inner membrane-spanning protein YciB (183 aa).

The next 5 membrane-spanning stretches (helical) occupy residues Phe4–Met24, Met50–Asp70, Thr72–Ser92, Val119–Phe139, and Phe149–Leu169.

Belongs to the YciB family.

Its subcellular location is the cell inner membrane. Plays a role in cell envelope biogenesis, maintenance of cell envelope integrity and membrane homeostasis. The chain is Inner membrane-spanning protein YciB from Aeromonas hydrophila subsp. hydrophila (strain ATCC 7966 / DSM 30187 / BCRC 13018 / CCUG 14551 / JCM 1027 / KCTC 2358 / NCIMB 9240 / NCTC 8049).